The sequence spans 263 residues: Neurogenin-2 (263 aa).

Residues 20 to 76 are disordered; sequence LGSASPASATLTPMSSSADEEEDEELRRPGSARGQRGAEAEQGVQGSPASGAGGCRP. Residues 24-36 are compositionally biased toward polar residues; sequence SPASATLTPMSSS. The bHLH domain maps to 112–164; the sequence is TRRLKANNRERNRMHNLNAALDALREVLPTFPEDAKLTKIETLRFAHNYIWAL. Over residues 197-231 the composition is skewed to low complexity; the sequence is LGASGDSPSPPSSWSCTNSPASSSNSTSPYSCTLS. The tract at residues 197 to 253 is disordered; it reads LGASGDSPSPPSSWSCTNSPASSSNSTSPYSCTLSPASPGSDVDYWQPPPPEKHRYA.

In terms of assembly, efficient DNA binding requires dimerization with another bHLH protein.

The protein localises to the nucleus. In terms of biological role, transcriptional regulator. Involved in neuronal differentiation. Activates transcription by binding to the E box (5'-CANNTG-3'). The protein is Neurogenin-2 (Neurog2) of Mus musculus (Mouse).